The chain runs to 846 residues: Disks large-associated protein 5 (846 aa).

Serine 67 carries the phosphoserine; by CDK1 modification. Residues 90–120 adopt a coiled-coil conformation; sequence RKQMLQKYKEEKQLQKLKEQREKAKRGIFKV. Residues 153-284 form a disordered region; it reads TRSKAKDQME…TNATSGMNPD (132 aa). Basic and acidic residues-rich tracts occupy residues 156-174 and 182-194; these read KAKD…DVRA and TSEK…EKKV. Serine 202 bears the Phosphoserine mark. Residues 203–225 are compositionally biased toward polar residues; that stretch reads LRMTRSATQAAKQVPRTVSSTTA. A compositionally biased stretch (basic and acidic residues) spans 250–266; the sequence is KNVETKPDKGISCKVDS. Residues 269 to 281 are compositionally biased toward polar residues; it reads NTLNSQTNATSGM. Threonine 326 carries the post-translational modification Phosphothreonine. Threonine 329 carries the phosphothreonine; by CDK1 modification. Position 338 is a phosphothreonine (threonine 338). Lysine 347 participates in a covalent cross-link: Glycyl lysine isopeptide (Lys-Gly) (interchain with G-Cter in SUMO2). Phosphothreonine; by CDK1 is present on residues threonine 401 and threonine 402. Serine 618 carries the post-translational modification Phosphoserine; by CDK1. Serine 627 carries the phosphoserine; by AURKA modification. Positions 628–671 are enriched in polar residues; it reads VSSEGPSQRLGTPKSVNKAVSQSRNEMGIPQQTTSPENAGPQNT. The disordered stretch occupies residues 628 to 674; that stretch reads VSSEGPSQRLGTPKSVNKAVSQSRNEMGIPQQTTSPENAGPQNTKSE. Phosphoserine occurs at positions 629 and 634. The residue at position 639 (threonine 639) is a Phosphothreonine; by CDK1. At serine 642 the chain carries Phosphoserine; by CDK1. Serine 662 carries the phosphoserine modification. Phosphoserine; by AURKA occurs at positions 725 and 757. The residue at position 759 (threonine 759) is a Phosphothreonine; by CDK1. Phosphoserine is present on residues serine 774 and serine 777. Threonine 784 is modified (phosphothreonine). A phosphoserine mark is found at serine 806 and serine 812. At serine 830 the chain carries Phosphoserine; by AURKA. Serine 839 bears the Phosphoserine; by CDK1 mark.

This sequence belongs to the SAPAP family. Interacts with CDK1. Interacts with the C-terminal proline-rich region of FBXO7. Recruited by FBXO7 to a SCF (SKP1-CUL1-F-box) protein complex in a CDK1/Cyclin B-phosphorylation dependent manner. Interacts with CDH1. Ubiquitinated, leading to its degradation. Post-translationally, decreased phosphorylation levels are associated with the differentiation of intestinal epithelial cells. Abundantly expressed in fetal liver. Expressed at lower levels in bone marrow, testis, colon, and placenta.

The protein localises to the nucleus. The protein resides in the cytoplasm. It is found in the cytoskeleton. It localises to the spindle. Its function is as follows. Potential cell cycle regulator that may play a role in carcinogenesis of cancer cells. Mitotic phosphoprotein regulated by the ubiquitin-proteasome pathway. Key regulator of adherens junction integrity and differentiation that may be involved in CDH1-mediated adhesion and signaling in epithelial cells. The polypeptide is Disks large-associated protein 5 (DLGAP5) (Homo sapiens (Human)).